Reading from the N-terminus, the 476-residue chain is Serine--tRNA ligase (476 aa).

L-serine is bound at residue 279 to 281 (TAE). 310–312 (RAE) provides a ligand contact to ATP. L-serine is bound at residue E333. 400-403 (EISS) is a binding site for ATP. S435 contributes to the L-serine binding site.

The protein belongs to the class-II aminoacyl-tRNA synthetase family. Type-1 seryl-tRNA synthetase subfamily. As to quaternary structure, homodimer. The tRNA molecule binds across the dimer.

The protein resides in the cytoplasm. It carries out the reaction tRNA(Ser) + L-serine + ATP = L-seryl-tRNA(Ser) + AMP + diphosphate + H(+). It catalyses the reaction tRNA(Sec) + L-serine + ATP = L-seryl-tRNA(Sec) + AMP + diphosphate + H(+). It participates in aminoacyl-tRNA biosynthesis; selenocysteinyl-tRNA(Sec) biosynthesis; L-seryl-tRNA(Sec) from L-serine and tRNA(Sec): step 1/1. Its function is as follows. Catalyzes the attachment of serine to tRNA(Ser). Is also able to aminoacylate tRNA(Sec) with serine, to form the misacylated tRNA L-seryl-tRNA(Sec), which will be further converted into selenocysteinyl-tRNA(Sec). The chain is Serine--tRNA ligase from Rhodopseudomonas palustris (strain BisA53).